The chain runs to 501 residues: Lysine--tRNA ligase (501 aa).

The Mg(2+) site is built by Glu411 and Glu418.

Belongs to the class-II aminoacyl-tRNA synthetase family. Homodimer. Mg(2+) serves as cofactor.

It localises to the cytoplasm. It carries out the reaction tRNA(Lys) + L-lysine + ATP = L-lysyl-tRNA(Lys) + AMP + diphosphate. This is Lysine--tRNA ligase from Pseudomonas aeruginosa (strain ATCC 15692 / DSM 22644 / CIP 104116 / JCM 14847 / LMG 12228 / 1C / PRS 101 / PAO1).